Here is a 132-residue protein sequence, read N- to C-terminus: Small ribosomal subunit protein uS8 (132 aa).

This sequence belongs to the universal ribosomal protein uS8 family. As to quaternary structure, part of the 30S ribosomal subunit. Contacts proteins S5 and S12.

Its function is as follows. One of the primary rRNA binding proteins, it binds directly to 16S rRNA central domain where it helps coordinate assembly of the platform of the 30S subunit. The chain is Small ribosomal subunit protein uS8 from Bacillus licheniformis (strain ATCC 14580 / DSM 13 / JCM 2505 / CCUG 7422 / NBRC 12200 / NCIMB 9375 / NCTC 10341 / NRRL NRS-1264 / Gibson 46).